The following is a 642-amino-acid chain: Threonine--tRNA ligase (642 aa).

A TGS domain is found at 1-61 (MPVITLPDGS…ETDVDLAIIT (61 aa)). The interval 243 to 534 (DHRKIGKQLD…LIEEYAGKFP (292 aa)) is catalytic. The Zn(2+) site is built by C334, H385, and H511.

It belongs to the class-II aminoacyl-tRNA synthetase family. In terms of assembly, homodimer. Zn(2+) is required as a cofactor.

It is found in the cytoplasm. It carries out the reaction tRNA(Thr) + L-threonine + ATP = L-threonyl-tRNA(Thr) + AMP + diphosphate + H(+). Functionally, catalyzes the attachment of threonine to tRNA(Thr) in a two-step reaction: L-threonine is first activated by ATP to form Thr-AMP and then transferred to the acceptor end of tRNA(Thr). Also edits incorrectly charged L-seryl-tRNA(Thr). The polypeptide is Threonine--tRNA ligase (Shewanella loihica (strain ATCC BAA-1088 / PV-4)).